Consider the following 123-residue polypeptide: Small ribosomal subunit protein bS16 (123 aa).

The segment at alanine 79 to glutamate 123 is disordered.

It belongs to the bacterial ribosomal protein bS16 family.

This Brucella melitensis biotype 2 (strain ATCC 23457) protein is Small ribosomal subunit protein bS16.